The following is a 130-amino-acid chain: Bet1-like SNARE 1-2 (130 aa).

At 1-106 (MNFRRENRAS…EKKSNRKSCK (106 aa)) the chain is on the cytoplasmic side. A t-SNARE coiled-coil homology domain is found at 33–95 (AHDERDNDEA…SGTINRFKLV (63 aa)). The stretch at 40 to 82 (DEALENLQDRVSFLKRVTGDIHEEVENHNRLLDKVGNKMDSAR) forms a coiled coil. A helical; Anchor for type IV membrane protein membrane pass occupies residues 107–122 (LIAYFVLLFLIMYYLI). Topologically, residues 123–130 (RLLNYIKG) are vesicular.

This sequence belongs to the BET1 family.

The protein resides in the golgi apparatus membrane. The protein localises to the endoplasmic reticulum membrane. In terms of biological role, required for vesicular transport from the ER to the Golgi complex. Functions as a SNARE associated with ER-derived vesicles. This chain is Bet1-like SNARE 1-2 (BET12), found in Arabidopsis thaliana (Mouse-ear cress).